Consider the following 361-residue polypeptide: sn-glycerol-3-phosphate import ATP-binding protein UgpC (361 aa).

The ABC transporter domain occupies 4-235; it reads LSLKGVRKSY…PATVFVAGFI (232 aa). 37 to 44 contributes to the ATP binding site; sequence GPSGCGKS.

This sequence belongs to the ABC transporter superfamily. sn-glycerol-3-phosphate importer (TC 3.A.1.1.3) family. In terms of assembly, the complex is composed of two ATP-binding proteins (UgpC), two transmembrane proteins (UgpA and UgpE) and a solute-binding protein (UgpB).

The protein localises to the cell inner membrane. The enzyme catalyses sn-glycerol 3-phosphate(out) + ATP + H2O = sn-glycerol 3-phosphate(in) + ADP + phosphate + H(+). In terms of biological role, part of the ABC transporter complex UgpBAEC involved in sn-glycerol-3-phosphate (G3P) import. Responsible for energy coupling to the transport system. The chain is sn-glycerol-3-phosphate import ATP-binding protein UgpC from Burkholderia lata (strain ATCC 17760 / DSM 23089 / LMG 22485 / NCIMB 9086 / R18194 / 383).